A 245-amino-acid chain; its full sequence is Probable transcriptional regulatory protein MARTH_orf271 (245 aa).

It belongs to the TACO1 family.

The protein resides in the cytoplasm. In Metamycoplasma arthritidis (strain 158L3-1) (Mycoplasma arthritidis), this protein is Probable transcriptional regulatory protein MARTH_orf271.